We begin with the raw amino-acid sequence, 151 residues long: Large ribosomal subunit protein uL13 (151 aa).

This sequence belongs to the universal ribosomal protein uL13 family. Part of the 50S ribosomal subunit.

Functionally, this protein is one of the early assembly proteins of the 50S ribosomal subunit, although it is not seen to bind rRNA by itself. It is important during the early stages of 50S assembly. In Synechococcus elongatus (strain ATCC 33912 / PCC 7942 / FACHB-805) (Anacystis nidulans R2), this protein is Large ribosomal subunit protein uL13.